A 97-amino-acid chain; its full sequence is Large ribosomal subunit protein uL23 (97 aa).

It belongs to the universal ribosomal protein uL23 family. In terms of assembly, part of the 50S ribosomal subunit. Contacts protein L29, and trigger factor when it is bound to the ribosome.

One of the early assembly proteins it binds 23S rRNA. One of the proteins that surrounds the polypeptide exit tunnel on the outside of the ribosome. Forms the main docking site for trigger factor binding to the ribosome. This is Large ribosomal subunit protein uL23 from Chelativorans sp. (strain BNC1).